Reading from the N-terminus, the 239-residue chain is Tetraspanin-9 (239 aa).

At 1-12 (MARGCLCCVKYM) the chain is on the cytoplasmic side. Residues 13 to 33 (LFLFNLLFWLGGCGLLGVGVW) form a helical membrane-spanning segment. Over 34–55 (LSVSQGSFATLSPSFPSISAAN) the chain is Extracellular. Residues 56–76 (LIITLGAVIMVTGFLGCLGAI) form a helical membrane-spanning segment. Residues 77–85 (KENKCLLLS) are Cytoplasmic-facing. Residues 86-106 (FFITLLVILLAELILLILFFV) form a helical membrane-spanning segment. The Extracellular portion of the chain corresponds to 107-203 (YTDNVSENAR…VEEWLDDNKH (97 aa)). 2 N-linked (GlcNAc...) asparagine glycosylation sites follow: Asn110 and Asn180. The helical transmembrane segment at 204-224 (LLGTIAMCVLVIQLLGMAFSM) threads the bilayer. Topologically, residues 225–239 (TLYQQIHRSGKKYEA) are cytoplasmic.

The protein belongs to the tetraspanin (TM4SF) family.

It localises to the membrane. The sequence is that of Tetraspanin-9 (tspan9) from Salmo salar (Atlantic salmon).